Reading from the N-terminus, the 72-residue chain is Candidate secreted effector protein MPL124499 (72 aa).

A signal peptide spans 1–21 (MKLSIFAAIFMAFVSLNQVFG).

It belongs to the CPGH1 family.

The protein localises to the secreted. The protein resides in the host cell. It localises to the host cytoplasm. Its subcellular location is the host nucleus. Its function is as follows. Rust effector delivered into infected tissues to modulate host functions and contribute to pathogen virulence. Enhances leaf colonization by the bacteria Pseudomonas syringae and the oomycete Hyaloperonospora arabidopsidis pathogens in an Arabidopsis thaliana infection model. The chain is Candidate secreted effector protein MPL124499 from Melampsora larici-populina (strain 98AG31 / pathotype 3-4-7) (Poplar leaf rust fungus).